We begin with the raw amino-acid sequence, 122 residues long: Large ribosomal subunit protein uL18 (122 aa).

Belongs to the universal ribosomal protein uL18 family. Part of the 50S ribosomal subunit; part of the 5S rRNA/L5/L18/L25 subcomplex. Contacts the 5S and 23S rRNAs.

In terms of biological role, this is one of the proteins that bind and probably mediate the attachment of the 5S RNA into the large ribosomal subunit, where it forms part of the central protuberance. The chain is Large ribosomal subunit protein uL18 from Thermotoga petrophila (strain ATCC BAA-488 / DSM 13995 / JCM 10881 / RKU-1).